Consider the following 525-residue polypeptide: Hydroxyneurosporene desaturase (525 aa).

The protein belongs to the carotenoid/retinoid oxidoreductase family.

It carries out the reaction rhodopin + A = (3E)-3,4-didehydrorhodopin + AH2. It participates in carotenoid biosynthesis; spheroidene biosynthesis. Functionally, catalyzes the introduction of C-3,4 double bonds into 1-hydroxyneurosporene (1-HO-Neu) to yield demethylspheroidene (DMS). The preferred substrates are 1-hydroxy-neurosporene, 1-hydroxy-lycopene and 1,1-dihydroxyneurosporene, however the 3,4-didehydrolycopene derivatives such as 1,1-dihydroxy-3,4-didehydrolycopene, 1-methoxy-1-hydroxy-3,4-didehydrolycopene and 1-hydroxy-3,4-didehydrolycopene are also efficiently converted. 1-HO-carotene derivatives can be also used. The polypeptide is Hydroxyneurosporene desaturase (crtD) (Rubrivivax gelatinosus (Rhodocyclus gelatinosus)).